The chain runs to 308 residues: Porphobilinogen deaminase (308 aa).

Cys-241 carries the post-translational modification S-(dipyrrolylmethanemethyl)cysteine.

It belongs to the HMBS family. As to quaternary structure, monomer. Requires dipyrromethane as cofactor.

The catalysed reaction is 4 porphobilinogen + H2O = hydroxymethylbilane + 4 NH4(+). The protein operates within porphyrin-containing compound metabolism; protoporphyrin-IX biosynthesis; coproporphyrinogen-III from 5-aminolevulinate: step 2/4. Functionally, tetrapolymerization of the monopyrrole PBG into the hydroxymethylbilane pre-uroporphyrinogen in several discrete steps. This is Porphobilinogen deaminase from Staphylococcus aureus (strain Mu50 / ATCC 700699).